Consider the following 200-residue polypeptide: Ras-related protein RABF2b (200 aa).

Residue 17-25 (GDVGAGKSS) coordinates GTP. An Effector region motif is present at residues 39–47 (QESTIGAAF). GTP-binding positions include 65–69 (DTAGQ), 123–126 (NKSD), and 153–154 (SA). 2 S-geranylgeranyl cysteine lipidation sites follow: Cys-198 and Cys-199.

It belongs to the small GTPase superfamily. Rab family. Interacts with VPS9A homodimer. Interacts with TCTP1. Interacts with MON1. Interacts with EREX (via PX domain). Binds to VPS3. Expressed in roots and actively dividing cells.

The protein localises to the early endosome membrane. It localises to the endosome membrane. It is found in the prevacuolar compartment membrane. The protein resides in the endosome. Its subcellular location is the multivesicular body membrane. The protein localises to the cell membrane. It localises to the cytoplasm. Its activity is regulated as follows. Regulated by guanine nucleotide exchange factors (GEFs) which promote the exchange of bound GDP for free GTP. Endosomal protein that may be involved in endocytosis. Involved in the trafficking of proteins from prevacuolar compartments (PVCs) to vacuoles. May activate the MON1-CCZ1 complex which acts as guanine nucleotide exchange factors (GEF) for Rab7 protein family, and serves as a link between Rab5 and Rab7 families in PVCs, and mediates PVC maturation. Involved in vacuolar transport of storage proteins with EREX as effector. Regulates membrane trafficking to protein storage vacuoles (PSVs). This is Ras-related protein RABF2b from Arabidopsis thaliana (Mouse-ear cress).